We begin with the raw amino-acid sequence, 231 residues long: Phosphatidylserine decarboxylase proenzyme (231 aa).

The active-site Schiff-base intermediate with substrate; via pyruvic acid is the serine 188. Pyruvic acid (Ser); by autocatalysis is present on serine 188.

The protein belongs to the phosphatidylserine decarboxylase family. PSD-A subfamily. In terms of assembly, heterodimer of a large membrane-associated beta subunit and a small pyruvoyl-containing alpha subunit. It depends on pyruvate as a cofactor. Post-translationally, is synthesized initially as an inactive proenzyme. Formation of the active enzyme involves a self-maturation process in which the active site pyruvoyl group is generated from an internal serine residue via an autocatalytic post-translational modification. Two non-identical subunits are generated from the proenzyme in this reaction, and the pyruvate is formed at the N-terminus of the alpha chain, which is derived from the carboxyl end of the proenzyme. The post-translation cleavage follows an unusual pathway, termed non-hydrolytic serinolysis, in which the side chain hydroxyl group of the serine supplies its oxygen atom to form the C-terminus of the beta chain, while the remainder of the serine residue undergoes an oxidative deamination to produce ammonia and the pyruvoyl prosthetic group on the alpha chain.

It localises to the cell membrane. It carries out the reaction a 1,2-diacyl-sn-glycero-3-phospho-L-serine + H(+) = a 1,2-diacyl-sn-glycero-3-phosphoethanolamine + CO2. Its pathway is phospholipid metabolism; phosphatidylethanolamine biosynthesis; phosphatidylethanolamine from CDP-diacylglycerol: step 2/2. Catalyzes the formation of phosphatidylethanolamine (PtdEtn) from phosphatidylserine (PtdSer). This Rickettsia peacockii (strain Rustic) protein is Phosphatidylserine decarboxylase proenzyme.